The primary structure comprises 122 residues: Large ribosomal subunit protein uL14 (122 aa).

The protein belongs to the universal ribosomal protein uL14 family. As to quaternary structure, part of the 50S ribosomal subunit. Forms a cluster with proteins L3 and L19. In the 70S ribosome, L14 and L19 interact and together make contacts with the 16S rRNA in bridges B5 and B8.

Binds to 23S rRNA. Forms part of two intersubunit bridges in the 70S ribosome. The polypeptide is Large ribosomal subunit protein uL14 (Ralstonia nicotianae (strain ATCC BAA-1114 / GMI1000) (Ralstonia solanacearum)).